Consider the following 143-residue polypeptide: Large ribosomal subunit protein uL11 (143 aa).

The protein belongs to the universal ribosomal protein uL11 family. In terms of assembly, part of the ribosomal stalk of the 50S ribosomal subunit. Interacts with L10 and the large rRNA to form the base of the stalk. L10 forms an elongated spine to which L12 dimers bind in a sequential fashion forming a multimeric L10(L12)X complex. Post-translationally, one or more lysine residues are methylated.

In terms of biological role, forms part of the ribosomal stalk which helps the ribosome interact with GTP-bound translation factors. In Paraburkholderia phymatum (strain DSM 17167 / CIP 108236 / LMG 21445 / STM815) (Burkholderia phymatum), this protein is Large ribosomal subunit protein uL11.